The sequence spans 309 residues: RING finger protein mug145 (309 aa).

The helical transmembrane segment at Ile23–Tyr43 threads the bilayer. An RING-type; atypical zinc finger spans residues Cys205–Asn247.

It is found in the membrane. Its function is as follows. Has a role in meiosis. The sequence is that of RING finger protein mug145 (mug145) from Schizosaccharomyces pombe (strain 972 / ATCC 24843) (Fission yeast).